The primary structure comprises 414 residues: 3-phosphoshikimate 1-carboxyvinyltransferase (414 aa).

The 3-phosphoshikimate site is built by lysine 20, serine 21, and arginine 25. Phosphoenolpyruvate is bound at residue lysine 20. Arginine 113 is a binding site for phosphoenolpyruvate. The 3-phosphoshikimate site is built by serine 154, serine 155, glutamine 156, serine 181, aspartate 296, and lysine 323. Glutamine 156 provides a ligand contact to phosphoenolpyruvate. The active-site Proton acceptor is the aspartate 296. Arginine 327, arginine 371, and lysine 395 together coordinate phosphoenolpyruvate.

The protein belongs to the EPSP synthase family. Monomer.

The protein resides in the cytoplasm. The enzyme catalyses 3-phosphoshikimate + phosphoenolpyruvate = 5-O-(1-carboxyvinyl)-3-phosphoshikimate + phosphate. It functions in the pathway metabolic intermediate biosynthesis; chorismate biosynthesis. Functionally, catalyzes the transfer of the enolpyruvyl moiety of phosphoenolpyruvate (PEP) to the 5-hydroxyl of shikimate-3-phosphate (S3P) to produce enolpyruvyl shikimate-3-phosphate and inorganic phosphate. The chain is 3-phosphoshikimate 1-carboxyvinyltransferase from Saccharolobus solfataricus (strain ATCC 35092 / DSM 1617 / JCM 11322 / P2) (Sulfolobus solfataricus).